Reading from the N-terminus, the 322-residue chain is Ribosomal RNA small subunit methyltransferase H (322 aa).

Residues 34 to 36, Asp59, Phe86, Asp112, and Gln119 each bind S-adenosyl-L-methionine; that span reads GGH.

It belongs to the methyltransferase superfamily. RsmH family.

It localises to the cytoplasm. The enzyme catalyses cytidine(1402) in 16S rRNA + S-adenosyl-L-methionine = N(4)-methylcytidine(1402) in 16S rRNA + S-adenosyl-L-homocysteine + H(+). Its function is as follows. Specifically methylates the N4 position of cytidine in position 1402 (C1402) of 16S rRNA. The polypeptide is Ribosomal RNA small subunit methyltransferase H (Chlorobium limicola (strain DSM 245 / NBRC 103803 / 6330)).